The sequence spans 455 residues: Growth/differentiation factor 6 (455 aa).

The first 22 residues, 1 to 22 (MDTPRVLLSAVFLISFLWDLPG), serve as a signal peptide directing secretion. Residues 23-335 (FQQASISSSS…LPSPGRRRRR (313 aa)) constitute a propeptide that is removed on maturation. A disordered region spans residues 29–93 (SSSSSSAELG…EPPGRGPRVV (65 aa)). The span at 45–76 (SRKEGKMQRAPRDSDAGREGQEPQPRPQDEPR) shows a compositional bias: basic and acidic residues. The segment covering 77 to 91 (AQQPRAQEPPGRGPR) has biased composition (low complexity). An N-linked (GlcNAc...) asparagine glycan is attached at asparagine 114. Disordered stretches follow at residues 244–267 (EAEARARGPQQPPPPDLRSLGFGR) and 300–351 (AEAA…KKSR). The span at 330–351 (GRRRRRTAFASRHGKRHGKKSR) shows a compositional bias: basic residues. 3 cysteine pairs are disulfide-bonded: cysteine 354–cysteine 420, cysteine 383–cysteine 452, and cysteine 387–cysteine 454.

Belongs to the TGF-beta family. Homodimer; disulfide-linked.

The protein resides in the secreted. In terms of biological role, growth factor that controls proliferation and cellular differentiation in the retina and bone formation. Plays a key role in regulating apoptosis during retinal development. Establishes dorsal-ventral positional information in the retina and controls the formation of the retinotectal map. Required for normal formation of bones and joints in the limbs, skull, digits and axial skeleton. Plays a key role in establishing boundaries between skeletal elements during development. Regulation of GDF6 expression seems to be a mechanism for evolving species-specific changes in skeletal structures. Seems to positively regulate differentiation of chondrogenic tissue through the growth factor receptors subunits BMPR1A, BMPR1B, BMPR2 and ACVR2A, leading to the activation of SMAD1-SMAD5-SMAD8 complex. The regulation of chondrogenic differentiation is inhibited by NOG. Also involved in the induction of adipogenesis from mesenchymal stem cells. This mechanism acts through the growth factor receptors subunits BMPR1A, BMPR2 and ACVR2A and the activation of SMAD1-SMAD5-SMAD8 complex and MAPK14/p38. The polypeptide is Growth/differentiation factor 6 (GDF6) (Homo sapiens (Human)).